Consider the following 397-residue polypeptide: Argininosuccinate synthase (397 aa).

ATP is bound at residue 8–16 (AYSGGLDTS). The L-citrulline site is built by Tyr-86 and Ser-91. Gly-116 is an ATP binding site. Thr-118, Asn-122, and Asp-123 together coordinate L-aspartate. L-citrulline is bound at residue Asn-122. Residues Arg-126, Ser-175, Ser-184, Glu-260, and Tyr-272 each coordinate L-citrulline.

Belongs to the argininosuccinate synthase family. Type 1 subfamily. As to quaternary structure, homotetramer.

Its subcellular location is the cytoplasm. The catalysed reaction is L-citrulline + L-aspartate + ATP = 2-(N(omega)-L-arginino)succinate + AMP + diphosphate + H(+). Its pathway is amino-acid biosynthesis; L-arginine biosynthesis; L-arginine from L-ornithine and carbamoyl phosphate: step 2/3. This is Argininosuccinate synthase from Clostridium botulinum (strain 657 / Type Ba4).